Consider the following 749-residue polypeptide: Replication restart protein PriA (749 aa).

The Helicase ATP-binding domain occupies Ser-224–Leu-391. An ATP-binding site is contributed by Gly-237–Thr-244. Positions Asp-333–His-336 match the DEAH box motif. Cys-454, Cys-457, Cys-463, Cys-466, Cys-481, Cys-484, Cys-495, and Cys-498 together coordinate Zn(2+). The region spanning Asp-490–Arg-658 is the Helicase C-terminal domain.

It belongs to the helicase family. PriA subfamily. Component of the replication restart primosome. Requires Zn(2+) as cofactor.

It catalyses the reaction Couples ATP hydrolysis with the unwinding of duplex DNA by translocating in the 3'-5' direction.. The enzyme catalyses ATP + H2O = ADP + phosphate + H(+). Initiates the restart of stalled replication forks, which reloads the replicative helicase on sites other than the origin of replication. Recognizes and binds to abandoned replication forks and remodels them to uncover a helicase loading site. Promotes assembly of the primosome at these replication forks. The sequence is that of Replication restart protein PriA from Chlamydia pneumoniae (Chlamydophila pneumoniae).